The chain runs to 562 residues: Arginine--tRNA ligase (562 aa).

The 'HIGH' region motif lies at 129–139; that stretch reads ANPTGPLHVGH.

Belongs to the class-I aminoacyl-tRNA synthetase family. Monomer.

The protein resides in the cytoplasm. The enzyme catalyses tRNA(Arg) + L-arginine + ATP = L-arginyl-tRNA(Arg) + AMP + diphosphate. The protein is Arginine--tRNA ligase of Xanthomonas oryzae pv. oryzae (strain MAFF 311018).